A 100-amino-acid chain; its full sequence is Small ribosomal subunit protein uS14c (100 aa).

It belongs to the universal ribosomal protein uS14 family. As to quaternary structure, part of the 30S ribosomal subunit.

It is found in the plastid. The protein resides in the chloroplast. Functionally, binds 16S rRNA, required for the assembly of 30S particles. The sequence is that of Small ribosomal subunit protein uS14c from Tetradesmus obliquus (Green alga).